Reading from the N-terminus, the 427-residue chain is Glutamate-1-semialdehyde 2,1-aminomutase 1 (427 aa).

Lys-267 is modified (N6-(pyridoxal phosphate)lysine).

This sequence belongs to the class-III pyridoxal-phosphate-dependent aminotransferase family. HemL subfamily. As to quaternary structure, homodimer. It depends on pyridoxal 5'-phosphate as a cofactor.

It is found in the cytoplasm. The enzyme catalyses (S)-4-amino-5-oxopentanoate = 5-aminolevulinate. It participates in porphyrin-containing compound metabolism; protoporphyrin-IX biosynthesis; 5-aminolevulinate from L-glutamyl-tRNA(Glu): step 2/2. The chain is Glutamate-1-semialdehyde 2,1-aminomutase 1 from Staphylococcus epidermidis (strain ATCC 35984 / DSM 28319 / BCRC 17069 / CCUG 31568 / BM 3577 / RP62A).